The chain runs to 270 residues: Bacterial microcompartment shell protein PduB (270 aa).

BMC circularly permuted domains lie at 47–152 (EFVG…DRTF) and 154–262 (DVYA…GSEP).

It belongs to the EutL/PduB family. In terms of assembly, homotrimerizes to form a pseudohexamer with a central pore. The trimers pack into an array. Both forms interact with shell protein PduA. In terms of processing, in purified BMCs seen as a 30.0 kDa and 25.0 kDa form; the smaller form is called PduB'.

The protein resides in the bacterial microcompartment. It functions in the pathway polyol metabolism; 1,2-propanediol degradation. In terms of biological role, the two proteins produced are among the major shell proteins of the bacterial microcompartment (BMC) shell dedicated to 1,2-propanediol (1,2-PD) degradation. Overexpression of the gene gives large amorphous intracellular structures; when only PduB is overexpressed large circular bodies are observed which contain concentric rings, whereas with PduB' overexpression internal bodies with regular straight-lined structures were generated. The N-terminus of the long form (PduB) is required for correct formation of BMCs. May play a major role in binding the enzyme contents to the shell. Functionally, expression of a cosmid containing the full 21-gene pdu operon in E.coli allows E.coli to grow on 1,2-propanediol (1,2-PD) with the appearance of BMCs in its cytoplasm. Its function is as follows. The 1,2-PD-specific bacterial microcompartment (BMC) concentrates low levels of 1,2-PD catabolic enzymes, concentrates volatile reaction intermediates thus enhancing pathway flux and keeps the level of toxic, mutagenic propionaldehyde low. In Citrobacter freundii, this protein is Bacterial microcompartment shell protein PduB.